The primary structure comprises 152 residues: Probable ribose-5-phosphate isomerase B (152 aa).

Position 10–11 (10–11 (DH)) interacts with D-ribulose 5-phosphate. C69 functions as the Proton acceptor in the catalytic mechanism. 70–74 (GTGVG) lines the D-ribulose 5-phosphate pocket. H102 functions as the Proton donor in the catalytic mechanism. D-ribulose 5-phosphate contacts are provided by D103, R113, R136, and R140.

The protein belongs to the LacAB/RpiB family. In terms of assembly, homodimer.

It catalyses the reaction aldehydo-D-ribose 5-phosphate = D-ribulose 5-phosphate. The protein operates within carbohydrate degradation; pentose phosphate pathway; D-ribose 5-phosphate from D-ribulose 5-phosphate (non-oxidative stage): step 1/1. Its function is as follows. Catalyzes the interconversion of ribulose-5-P and ribose-5-P. This chain is Probable ribose-5-phosphate isomerase B, found in Mycoplasma genitalium (strain ATCC 33530 / DSM 19775 / NCTC 10195 / G37) (Mycoplasmoides genitalium).